The sequence spans 851 residues: DNA mismatch repair protein MutS (851 aa).

614-621 (GPNMGGKS) contributes to the ATP binding site.

This sequence belongs to the DNA mismatch repair MutS family.

This protein is involved in the repair of mismatches in DNA. It is possible that it carries out the mismatch recognition step. This protein has a weak ATPase activity. The protein is DNA mismatch repair protein MutS of Yersinia pestis.